A 232-amino-acid chain; its full sequence is Orotate phosphoribosyltransferase (232 aa).

Residues Arg107, Lys108, Lys111, His113, and 133 to 141 each bind 5-phospho-alpha-D-ribose 1-diphosphate; that span reads EDLTTAGGS. Thr137 provides a ligand contact to orotate.

This sequence belongs to the purine/pyrimidine phosphoribosyltransferase family. PyrE subfamily. As to quaternary structure, homodimer. Mg(2+) is required as a cofactor.

The enzyme catalyses orotidine 5'-phosphate + diphosphate = orotate + 5-phospho-alpha-D-ribose 1-diphosphate. It functions in the pathway pyrimidine metabolism; UMP biosynthesis via de novo pathway; UMP from orotate: step 1/2. Functionally, catalyzes the transfer of a ribosyl phosphate group from 5-phosphoribose 1-diphosphate to orotate, leading to the formation of orotidine monophosphate (OMP). The sequence is that of Orotate phosphoribosyltransferase from Sinorhizobium medicae (strain WSM419) (Ensifer medicae).